The chain runs to 311 residues: Nudix hydrolase 9 (311 aa).

The region spanning 131–298 (SSPLGNGAVI…GFALYELMLQ (168 aa)) is the Nudix hydrolase domain. Positions 192–213 (LNKKVTQEMFDSIICEVVEETG) match the Nudix box motif. Glu207 and Glu211 together coordinate Mg(2+).

This sequence belongs to the Nudix hydrolase family. Mg(2+) serves as cofactor. It depends on Mn(2+) as a cofactor. In terms of tissue distribution, expressed in roots, stems and leaves.

Probably mediates the hydrolysis of some nucleoside diphosphate derivatives. The polypeptide is Nudix hydrolase 9 (NUDT9) (Arabidopsis thaliana (Mouse-ear cress)).